Here is a 187-residue protein sequence, read N- to C-terminus: MADQLSEEQIVEFREAFSLFDKDGDGSITTKELGTVMRSLGQNPTEAELQDMISEVDADSNGNIEFKEFLGLMARKLRDKDSEEELKEAFRVFDKDQNGFISAAELRHVMANIGERLTDEEVGEMISEADVDGDGQINYEEFVKCMMAKKRRKRIEEKREHDGGSRTKSAGPSAAPASKRGQKCVIL.

Ala2 bears the N-acetylalanine mark. EF-hand domains lie at 8–43, 44–79, 81–116, and 117–152; these read EQIV…LGQN, PTEA…KLRD, DSEE…IGER, and LTDE…KKRR. Residues Asp21, Asp23, Asp25, Ser27, Glu32, Asp57, Asp59, Asn61, Asn63, Glu68, Asp94, Asp96, Asn98, Glu105, Asp130, Asp132, Asp134, Gln136, and Glu141 each coordinate Ca(2+). The disordered stretch occupies residues 153–187; that stretch reads KRIEEKREHDGGSRTKSAGPSAAPASKRGQKCVIL. Positions 154–165 are enriched in basic and acidic residues; that stretch reads RIEEKREHDGGS. A compositionally biased stretch (low complexity) spans 169-178; that stretch reads SAGPSAAPAS. Position 184 is a cysteine methyl ester (Cys184). Cys184 carries the S-farnesyl cysteine lipid modification. Positions 185 to 187 are cleaved as a propeptide — removed in mature form; that stretch reads VIL.

It belongs to the calmodulin family. In terms of tissue distribution, expressed in roots, etiolated shoots and flowers.

Its subcellular location is the membrane. In terms of biological role, calcium-binding protein that binds and activates CAMK1, a calcium/calmodulin-dependent kinase. This chain is Calmodulin-like protein 1 (CML1), found in Oryza sativa subsp. indica (Rice).